Reading from the N-terminus, the 112-residue chain is uncharacterized protein (112 aa).

Residues 6–60 (LRQLRKAHKLTMEQLAEKIGIAKSSYGGYEAESKKPPLDKLVILARLYDVSVDYI) enclose the HTH cro/C1-type domain. The H-T-H motif DNA-binding region spans 17–36 (MEQLAEKIGIAKSSYGGYEA).

This is an uncharacterized protein from Bacillus subtilis (strain 168).